The following is a 120-amino-acid chain: Chaperonin GroEL (120 aa).

23-27 (DGTTT) contacts ATP.

Belongs to the chaperonin (HSP60) family. As to quaternary structure, forms a cylinder of 14 subunits composed of two heptameric rings stacked back-to-back. Interacts with the co-chaperonin GroES.

It localises to the cytoplasm. It carries out the reaction ATP + H2O + a folded polypeptide = ADP + phosphate + an unfolded polypeptide.. Its function is as follows. Together with its co-chaperonin GroES, plays an essential role in assisting protein folding. The GroEL-GroES system forms a nano-cage that allows encapsulation of the non-native substrate proteins and provides a physical environment optimized to promote and accelerate protein folding. This chain is Chaperonin GroEL, found in Mycobacterium scrofulaceum.